The chain runs to 309 residues: Probable manganese-dependent inorganic pyrophosphatase (309 aa).

Positions 9, 13, 15, 75, 97, and 149 each coordinate Mn(2+).

This sequence belongs to the PPase class C family. It depends on Mn(2+) as a cofactor.

The protein resides in the cytoplasm. It carries out the reaction diphosphate + H2O = 2 phosphate + H(+). The sequence is that of Probable manganese-dependent inorganic pyrophosphatase from Bacillus cereus (strain AH187).